The sequence spans 377 residues: Ferric enterobactin transport protein FepE (377 aa).

Residues 1 to 41 (MSSLNIKQGSDAHFPDYPLASPSNNEIDLLNLISVLWRAKK) are Cytoplasmic-facing. A helical transmembrane segment spans residues 42-62 (TVMAVVFAFACAGLLISFILP). The Periplasmic portion of the chain corresponds to 63–338 (QKWTSAAVVT…LPVKKDGPGK (276 aa)). Residues 339-359 (AIIVILSALIGGMVACGGVLL) form a helical membrane-spanning segment. The Cytoplasmic segment spans residues 360-377 (RYAMASRKQDAMMADHLV).

The protein belongs to the WzzB/Cld/Rol family.

It is found in the cell inner membrane. Its function is as follows. Part of the ferric enterobactin transport system. The chain is Ferric enterobactin transport protein FepE (fepE) from Escherichia coli (strain K12).